The chain runs to 312 residues: tRNA dimethylallyltransferase (312 aa).

Position 17 to 24 (17 to 24 (GPTASGKS)) interacts with ATP. Residue 19–24 (TASGKS) participates in substrate binding.

The protein belongs to the IPP transferase family. As to quaternary structure, monomer. It depends on Mg(2+) as a cofactor.

The enzyme catalyses adenosine(37) in tRNA + dimethylallyl diphosphate = N(6)-dimethylallyladenosine(37) in tRNA + diphosphate. Catalyzes the transfer of a dimethylallyl group onto the adenine at position 37 in tRNAs that read codons beginning with uridine, leading to the formation of N6-(dimethylallyl)adenosine (i(6)A). This chain is tRNA dimethylallyltransferase, found in Zymomonas mobilis subsp. mobilis (strain ATCC 31821 / ZM4 / CP4).